The primary structure comprises 213 residues: ATP phosphoribosyltransferase (213 aa).

The protein belongs to the ATP phosphoribosyltransferase family. Short subfamily. In terms of assembly, heteromultimer composed of HisG and HisZ subunits.

Its subcellular location is the cytoplasm. It catalyses the reaction 1-(5-phospho-beta-D-ribosyl)-ATP + diphosphate = 5-phospho-alpha-D-ribose 1-diphosphate + ATP. It functions in the pathway amino-acid biosynthesis; L-histidine biosynthesis; L-histidine from 5-phospho-alpha-D-ribose 1-diphosphate: step 1/9. In terms of biological role, catalyzes the condensation of ATP and 5-phosphoribose 1-diphosphate to form N'-(5'-phosphoribosyl)-ATP (PR-ATP). Has a crucial role in the pathway because the rate of histidine biosynthesis seems to be controlled primarily by regulation of HisG enzymatic activity. This Bacillus pumilus (strain SAFR-032) protein is ATP phosphoribosyltransferase.